The sequence spans 140 residues: Required for drug-induced death protein 1 (140 aa).

Residues 1–95 (MTVGARLRSK…DKPKKRYRRK (95 aa)) form a disordered region. Positions 29 to 53 (EETDAIVEHLEGEDEDPESQDCERE) are enriched in acidic residues. Residues 118–140 (LQGFAAAYSAPFGVATSVVSFVR) traverse the membrane as a helical segment.

It is found in the membrane. In terms of biological role, regulates drug efflux through modulation of ABCB1 localization and activity. In Rattus norvegicus (Rat), this protein is Required for drug-induced death protein 1.